The chain runs to 310 residues: D-erythrulose 1-phosphate 3-epimerase (310 aa).

The enzyme catalyses D-erythrulose 1-phosphate = L-erythrulose 1-phosphate. Its pathway is carbohydrate metabolism; erythritol degradation. Catalyzes the racemization of D-erythrulose 1-phosphate to L-erythrulose 1-phosphate. The chain is D-erythrulose 1-phosphate 3-epimerase from Brucella abortus (strain 2308).